The primary structure comprises 240 residues: ATP-dependent dethiobiotin synthetase BioD (240 aa).

An ATP-binding site is contributed by 15–20 (EIGKTF). Threonine 19 provides a ligand contact to Mg(2+). Residue lysine 40 is part of the active site. Residues aspartate 57, 118–121 (EGVG), and 178–179 (NR) contribute to the ATP site. The Mg(2+) site is built by aspartate 57 and glutamate 118.

The protein belongs to the dethiobiotin synthetase family. As to quaternary structure, homodimer. Requires Mg(2+) as cofactor.

It is found in the cytoplasm. It catalyses the reaction (7R,8S)-7,8-diammoniononanoate + CO2 + ATP = (4R,5S)-dethiobiotin + ADP + phosphate + 3 H(+). It functions in the pathway cofactor biosynthesis; biotin biosynthesis; biotin from 7,8-diaminononanoate: step 1/2. Catalyzes a mechanistically unusual reaction, the ATP-dependent insertion of CO2 between the N7 and N8 nitrogen atoms of 7,8-diaminopelargonic acid (DAPA, also called 7,8-diammoniononanoate) to form a ureido ring. This chain is ATP-dependent dethiobiotin synthetase BioD, found in Burkholderia mallei (strain NCTC 10247).